A 491-amino-acid chain; its full sequence is Protein nucleotidyltransferase YdiU (491 aa).

Residues Gly-92, Gly-94, Arg-95, Lys-115, Asp-127, Gly-128, Arg-178, and Arg-185 each contribute to the ATP site. Catalysis depends on Asp-254, which acts as the Proton acceptor. Positions 255 and 264 each coordinate Mg(2+). Asp-264 contacts ATP.

It belongs to the SELO family. Mg(2+) is required as a cofactor. It depends on Mn(2+) as a cofactor.

It catalyses the reaction L-seryl-[protein] + ATP = 3-O-(5'-adenylyl)-L-seryl-[protein] + diphosphate. The enzyme catalyses L-threonyl-[protein] + ATP = 3-O-(5'-adenylyl)-L-threonyl-[protein] + diphosphate. The catalysed reaction is L-tyrosyl-[protein] + ATP = O-(5'-adenylyl)-L-tyrosyl-[protein] + diphosphate. It carries out the reaction L-histidyl-[protein] + UTP = N(tele)-(5'-uridylyl)-L-histidyl-[protein] + diphosphate. It catalyses the reaction L-seryl-[protein] + UTP = O-(5'-uridylyl)-L-seryl-[protein] + diphosphate. The enzyme catalyses L-tyrosyl-[protein] + UTP = O-(5'-uridylyl)-L-tyrosyl-[protein] + diphosphate. Functionally, nucleotidyltransferase involved in the post-translational modification of proteins. It can catalyze the addition of adenosine monophosphate (AMP) or uridine monophosphate (UMP) to a protein, resulting in modifications known as AMPylation and UMPylation. The protein is Protein nucleotidyltransferase YdiU of Mycolicibacterium paratuberculosis (strain ATCC BAA-968 / K-10) (Mycobacterium paratuberculosis).